We begin with the raw amino-acid sequence, 123 residues long: Small ribosomal subunit protein eS8 (123 aa).

A disordered region spans residues 1–38 (MKDQGRSPRKRTGGRRRPNHKKKKHELGKDTVETQVGE). Residues 7–26 (SPRKRTGGRRRPNHKKKKHE) show a composition bias toward basic residues.

Part of the 30S ribosomal subunit.

The chain is Small ribosomal subunit protein eS8 (rps8e) from Haloarcula marismortui (strain ATCC 43049 / DSM 3752 / JCM 8966 / VKM B-1809) (Halobacterium marismortui).